We begin with the raw amino-acid sequence, 1025 residues long: Fanconi-associated nuclease 1 (1025 aa).

The UBZ4-type zinc-finger motif lies at 40-68; the sequence is KLACPICSKMVPRYDLNWHLDEKCANNDN. Zn(2+) is bound by residues cysteine 43, cysteine 46, histidine 58, and cysteine 63. The tract at residues 98-120 is disordered; it reads TPGKLSPSKASLTPDPSDSAKMG. Residue serine 182 is modified to Phosphoserine. Residues 682–704 are a coiled coil; it reads VEILQRLHMYEEAVKELESLLSQ. Residues glutamate 842, aspartate 968, glutamate 983, and valine 984 each coordinate Mn(2+). In terms of domain architecture, VRR-NUC spans 903–1015; sequence AESLRAWVAA…GADVEVCHVV (113 aa).

The protein belongs to the FAN1 family. Interacts with FANCD2 (when monoubiquitinated). Interacts with FANCI, MLH1, MLH3 and PMS2. The cofactor is Mn(2+). Mg(2+) is required as a cofactor. In terms of processing, ubiquitinated and degraded during mitotic exit by the APC/C-Cdh1 complex.

It is found in the nucleus. It carries out the reaction Hydrolytically removes 5'-nucleotides successively from the 3'-hydroxy termini of 3'-hydroxy-terminated oligonucleotides.. Functionally, nuclease required for the repair of DNA interstrand cross-links (ICL) recruited at sites of DNA damage by monoubiquitinated FANCD2. Specifically involved in repair of ICL-induced DNA breaks by being required for efficient homologous recombination, probably in the resolution of homologous recombination intermediates. Not involved in DNA double-strand breaks resection. Acts as a 5'-3' exonuclease that anchors at a cut end of DNA and cleaves DNA successively at every third nucleotide, allowing to excise an ICL from one strand through flanking incisions. Probably keeps excising with 3'-flap annealing until it reaches and unhooks the ICL. Acts at sites that have a 5'-terminal phosphate anchor at a nick or a 1- or 2-nucleotide flap and is augmented by a 3' flap. Also has endonuclease activity toward 5'-flaps. This chain is Fanconi-associated nuclease 1 (FAN1), found in Ailuropoda melanoleuca (Giant panda).